A 704-amino-acid chain; its full sequence is Elongation factor G 2 (704 aa).

The region spanning 8 to 290 (ERYRNIGISA…AIIDYLPSPV (283 aa)) is the tr-type G domain. GTP-binding positions include 17-24 (AHIDAGKT), 88-92 (DTPGH), and 142-145 (NKMD).

Belongs to the TRAFAC class translation factor GTPase superfamily. Classic translation factor GTPase family. EF-G/EF-2 subfamily.

The protein localises to the cytoplasm. Functionally, catalyzes the GTP-dependent ribosomal translocation step during translation elongation. During this step, the ribosome changes from the pre-translocational (PRE) to the post-translocational (POST) state as the newly formed A-site-bound peptidyl-tRNA and P-site-bound deacylated tRNA move to the P and E sites, respectively. Catalyzes the coordinated movement of the two tRNA molecules, the mRNA and conformational changes in the ribosome. In Polaromonas sp. (strain JS666 / ATCC BAA-500), this protein is Elongation factor G 2.